Here is a 91-residue protein sequence, read N- to C-terminus: Large ribosomal subunit protein bL27 (91 aa).

This sequence belongs to the bacterial ribosomal protein bL27 family. In terms of assembly, part of the 50S ribosomal subunit. Contacts protein L18.

Its function is as follows. Binds the 5S and 23S rRNAs and also the tRNA in the P site. This Deinococcus radiodurans (strain ATCC 13939 / DSM 20539 / JCM 16871 / CCUG 27074 / LMG 4051 / NBRC 15346 / NCIMB 9279 / VKM B-1422 / R1) protein is Large ribosomal subunit protein bL27 (rpmA).